The sequence spans 1363 residues: DNA-directed RNA polymerase subunit beta (1363 aa).

This sequence belongs to the RNA polymerase beta chain family. As to quaternary structure, the RNAP catalytic core consists of 2 alpha, 1 beta, 1 beta' and 1 omega subunit. When a sigma factor is associated with the core the holoenzyme is formed, which can initiate transcription.

It carries out the reaction RNA(n) + a ribonucleoside 5'-triphosphate = RNA(n+1) + diphosphate. In terms of biological role, DNA-dependent RNA polymerase catalyzes the transcription of DNA into RNA using the four ribonucleoside triphosphates as substrates. The protein is DNA-directed RNA polymerase subunit beta of Pelagibacter ubique (strain HTCC1062).